A 206-amino-acid chain; its full sequence is Large ribosomal subunit protein uL4 (206 aa).

Residues 62–85 (KPWRQKGTGRARQGSTRSPQFRGG) are disordered.

This sequence belongs to the universal ribosomal protein uL4 family. Part of the 50S ribosomal subunit.

In terms of biological role, one of the primary rRNA binding proteins, this protein initially binds near the 5'-end of the 23S rRNA. It is important during the early stages of 50S assembly. It makes multiple contacts with different domains of the 23S rRNA in the assembled 50S subunit and ribosome. Forms part of the polypeptide exit tunnel. This chain is Large ribosomal subunit protein uL4, found in Rhodospirillum centenum (strain ATCC 51521 / SW).